A 428-amino-acid polypeptide reads, in one-letter code: Phosphomethylpyrimidine synthase 1 (428 aa).

Residues Met94, Tyr123, His162, 184–186 (SRG), 225–228 (NGMR), and Glu264 each bind substrate. His268 serves as a coordination point for Zn(2+). Substrate is bound at residue Tyr291. His332 serves as a coordination point for Zn(2+). Cys408, Cys411, and Cys415 together coordinate [4Fe-4S] cluster.

The protein belongs to the ThiC family. Requires [4Fe-4S] cluster as cofactor.

The catalysed reaction is 5-amino-1-(5-phospho-beta-D-ribosyl)imidazole + S-adenosyl-L-methionine = 4-amino-2-methyl-5-(phosphooxymethyl)pyrimidine + CO + 5'-deoxyadenosine + formate + L-methionine + 3 H(+). It functions in the pathway cofactor biosynthesis; thiamine diphosphate biosynthesis. In terms of biological role, catalyzes the synthesis of the hydroxymethylpyrimidine phosphate (HMP-P) moiety of thiamine from aminoimidazole ribotide (AIR) in a radical S-adenosyl-L-methionine (SAM)-dependent reaction. In Methanosarcina barkeri (strain Fusaro / DSM 804), this protein is Phosphomethylpyrimidine synthase 1.